A 301-amino-acid chain; its full sequence is Small ribosomal subunit protein uS3 (301 aa).

Residues 39–107 form the KH type-2 domain; sequence VREYLKAKLK…PVAVNIEEVR (69 aa). The interval 211-301 is disordered; the sequence is GESPGAKLDA…AAAADGTKTE (91 aa). Residues 224-244 show a composition bias toward basic and acidic residues; it reads DEERKPRGPRRDARPGSDRPA. Over residues 245–257 the composition is skewed to low complexity; the sequence is PRGARAPRAPAGG.

It belongs to the universal ribosomal protein uS3 family. Part of the 30S ribosomal subunit. Forms a tight complex with proteins S10 and S14.

In terms of biological role, binds the lower part of the 30S subunit head. Binds mRNA in the 70S ribosome, positioning it for translation. This is Small ribosomal subunit protein uS3 from Polaromonas sp. (strain JS666 / ATCC BAA-500).